Consider the following 469-residue polypeptide: 1-aminocyclopropane-1-carboxylate synthase 3 (469 aa).

At K272 the chain carries N6-(pyridoxal phosphate)lysine. Residues 432–452 (APNATNHQNQQQSNANSKKKS) form a disordered region. Residues 437–447 (NHQNQQQSNAN) show a composition bias toward low complexity.

Belongs to the class-I pyridoxal-phosphate-dependent aminotransferase family. As to quaternary structure, homodimer. Pyridoxal 5'-phosphate is required as a cofactor.

The catalysed reaction is S-adenosyl-L-methionine = 1-aminocyclopropane-1-carboxylate + S-methyl-5'-thioadenosine + H(+). Its pathway is alkene biosynthesis; ethylene biosynthesis via S-adenosyl-L-methionine; ethylene from S-adenosyl-L-methionine: step 1/2. Catalyzes the formation of 1-aminocyclopropane-1-carboxylate, a direct precursor of ethylene in higher plants. In Solanum lycopersicum (Tomato), this protein is 1-aminocyclopropane-1-carboxylate synthase 3 (ACS3).